A 215-amino-acid chain; its full sequence is LexA repressor (215 aa).

The H-T-H motif DNA-binding region spans 28 to 48 (RAEIAAELGFSSPNAAEEHLR). Active-site for autocatalytic cleavage activity residues include serine 133 and lysine 170.

The protein belongs to the peptidase S24 family. As to quaternary structure, homodimer.

It carries out the reaction Hydrolysis of Ala-|-Gly bond in repressor LexA.. In terms of biological role, represses a number of genes involved in the response to DNA damage (SOS response), including recA and lexA. In the presence of single-stranded DNA, RecA interacts with LexA causing an autocatalytic cleavage which disrupts the DNA-binding part of LexA, leading to derepression of the SOS regulon and eventually DNA repair. The protein is LexA repressor of Burkholderia cenocepacia (strain HI2424).